The chain runs to 276 residues: Rhomboid-type serine protease 2 (276 aa).

5 helical membrane-spanning segments follow: residues 27 to 47 (LPLF…LTLV), 77 to 97 (FPFI…FTPL), 109 to 129 (TSVA…YVFV), 132 to 152 (FILH…LLLG), and 175 to 195 (WITP…SSFL). Serine 144 functions as the Nucleophile in the catalytic mechanism. Histidine 197 is a catalytic residue. Residues 198–218 (LAGLLVGYGFGLGYLKFLAPP) form a helical membrane-spanning segment.

Belongs to the peptidase S54 family.

The protein localises to the golgi apparatus membrane. Its subcellular location is the golgi apparatus. The protein resides in the cis-Golgi network membrane. The catalysed reaction is Cleaves type-1 transmembrane domains using a catalytic dyad composed of serine and histidine that are contributed by different transmembrane domains.. In terms of biological role, probable rhomboid-type serine protease that catalyzes intramembrane proteolysis. In Neurospora crassa (strain ATCC 24698 / 74-OR23-1A / CBS 708.71 / DSM 1257 / FGSC 987), this protein is Rhomboid-type serine protease 2 (rbd-2).